Reading from the N-terminus, the 66-residue chain is Beta-mammal toxin Cv5 (66 aa).

The 66-residue stretch at 1-66 folds into the LCN-type CS-alpha/beta domain; that stretch reads KEGYIVNYYD…VWPLPKKKCN (66 aa). 4 disulfides stabilise this stretch: Cys-12/Cys-65, Cys-16/Cys-41, Cys-25/Cys-46, and Cys-29/Cys-48.

In terms of tissue distribution, expressed by the venom gland.

It localises to the secreted. Is susceptible to be neutralized by human antibodies scFvs 10FG2 and HV. Beta toxins bind voltage-independently at site-4 of sodium channels (Nav) and reduces peak current and shifts the voltage of activation toward more negative potentials thereby affecting sodium channel activation and promoting spontaneous and repetitive firing. This toxin is moderately toxic to mice. The chain is Beta-mammal toxin Cv5 from Centruroides villegasi (Scorpion).